Here is a 405-residue protein sequence, read N- to C-terminus: Argininosuccinate synthase (405 aa).

ATP-binding positions include 10–18 (AYSGGLDTS) and A37. L-citrulline contacts are provided by Y88 and S93. G118 is an ATP binding site. Positions 120, 124, and 125 each coordinate L-aspartate. N124 contacts L-citrulline. The L-citrulline site is built by R128, S179, S188, E264, and Y276.

The protein belongs to the argininosuccinate synthase family. Type 1 subfamily. In terms of assembly, homotetramer.

Its subcellular location is the cytoplasm. The catalysed reaction is L-citrulline + L-aspartate + ATP = 2-(N(omega)-L-arginino)succinate + AMP + diphosphate + H(+). The protein operates within amino-acid biosynthesis; L-arginine biosynthesis; L-arginine from L-ornithine and carbamoyl phosphate: step 2/3. This is Argininosuccinate synthase from Pseudomonas putida (strain GB-1).